The sequence spans 500 residues: Mannan polymerase II complex ANP1 subunit (500 aa).

Over 1 to 15 (MKYNNRKLSFNPTTV) the chain is Cytoplasmic. A helical; Signal-anchor for type II membrane protein membrane pass occupies residues 16-27 (SIAGTLLTVFFL). Residues 28 to 500 (TRLVLSFFSI…VPLDFDPDRN (473 aa)) lie on the Lumenal side of the membrane. A disordered region spans residues 424-500 (WSEEGDGSEL…VPLDFDPDRN (77 aa)). The span at 446 to 467 (QQQQQQQQQQQQQQQQQQQQQQ) shows a compositional bias: low complexity. Basic and acidic residues predominate over residues 489–500 (KEVPLDFDPDRN).

It belongs to the ANP1/MMN9/VAN1 family. In terms of assembly, component of the M-Pol II complex composed of ANP1, MNN9, MNN10, MNN11 and HOC1.

It localises to the endoplasmic reticulum membrane. It is found in the golgi apparatus membrane. Functionally, involved in the organization of the secretory pathway. Required to maintain a functional Golgi apparatus. Its function is as follows. The M-Pol II complex possesses alpha-1,6-mannosyltransferase activity and is probably involved in the elongation of the mannan backbone of N-linked glycans on cell wall and periplasmic proteins. This Saccharomyces cerevisiae (strain ATCC 204508 / S288c) (Baker's yeast) protein is Mannan polymerase II complex ANP1 subunit (ANP1).